Reading from the N-terminus, the 259-residue chain is Glutathione S-transferase domain-containing protein DDB_G0274705 (259 aa).

The GST N-terminal domain maps to Lys-7–Leu-96. The 131-residue stretch at Asn-102–Leu-232 folds into the GST C-terminal domain.

Belongs to the GST superfamily.

This chain is Glutathione S-transferase domain-containing protein DDB_G0274705, found in Dictyostelium discoideum (Social amoeba).